A 110-amino-acid chain; its full sequence is Ribonuclease (110 aa).

Glu73 (proton acceptor) is an active-site residue. His102 serves as the catalytic Proton donor.

This sequence belongs to the ribonuclease N1/T1 family.

Its subcellular location is the secreted. Hydrolyzes phosphodiester bonds in RNA, poly- and oligoribonucleotides resulting in 3'-nucleoside monophosphates via 2',3'-cyclophosphate intermediates. In Niallia circulans (Bacillus circulans), this protein is Ribonuclease.